A 490-amino-acid chain; its full sequence is Cytochrome P450 2W1 (490 aa).

A signal peptide spans 1 to 22; sequence MALLLLLFLGLLGLWGLLCACA. The N-linked (GlcNAc...) asparagine glycan is linked to N177. C433 contacts heme.

The protein belongs to the cytochrome P450 family. Heme serves as cofactor. Very low levels are detected in fetal and adult tissues. Highly expressed in several tumor samples, in particular colon and adrenal tumors.

It is found in the endoplasmic reticulum lumen. The protein resides in the cell membrane. The protein localises to the microsome membrane. The enzyme catalyses all-trans-retinoate + reduced [NADPH--hemoprotein reductase] + O2 = all-trans-4-hydroxyretinoate + oxidized [NADPH--hemoprotein reductase] + H2O + H(+). It carries out the reaction 1-(9Z-octadecenoyl)-sn-glycero-3-phosphocholine + reduced [NADPH--hemoprotein reductase] + O2 = 1-[8-hydroxy-(9Z)-octadecenoyl]-sn-glycero-3-phosphocholine + oxidized [NADPH--hemoprotein reductase] + H2O + H(+). The catalysed reaction is 1-(9Z-octadecenoyl)-sn-glycero-3-phosphocholine + reduced [NADPH--hemoprotein reductase] + O2 = 1-[11-hydroxy-(9Z)-octadecenoyl]-sn-glycero-3-phosphocholine + oxidized [NADPH--hemoprotein reductase] + H2O + H(+). It catalyses the reaction 1-(9Z-octadecenoyl)-sn-glycero-3-phosphocholine + reduced [NADPH--hemoprotein reductase] + O2 = 1-[(9S,10R)-epoxy-octadecanoyl]-sn-glycero-3-phosphocholine + oxidized [NADPH--hemoprotein reductase] + H2O + H(+). The enzyme catalyses 1-(9Z-octadecenoyl)-sn-glycero-3-phosphocholine + reduced [NADPH--hemoprotein reductase] + O2 = 1-[(9R,10S)-epoxy-octadecanoyl]-sn-glycero-3-phosphocholine + oxidized [NADPH--hemoprotein reductase] + H2O + H(+). Functionally, a cytochrome P450 monooxygenase that may play a role in retinoid and phospholipid metabolism. Catalyzes the hydroxylation of saturated carbon hydrogen bonds. Hydroxylates all trans-retinoic acid (atRA) to 4-hydroxyretinoate and may regulate atRA clearance. Other retinoids such as all-trans retinol and all-trans retinal are potential endogenous substrates. Catalyzes both epoxidation of double bonds and hydroxylation of carbon hydrogen bonds of the fatty acyl chain of 1-acylphospholipids/2-lysophospholipids. Can metabolize various lysophospholipids classes including lysophosphatidylcholines (LPCs), lysophosphatidylinositols (LPIs), lysophosphatidylserines (LPSs), lysophosphatidylglycerols (LPGs), lysophosphatidylethanolamines (LPEs) and lysophosphatidic acids (LPAs). Has low or no activity toward 2-acylphospholipids/1-lysophospholipids, diacylphospholipids and free fatty acids. May play a role in tumorigenesis by activating procarcinogens such as aflatoxin B1, polycyclic aromatic hydrocarbon dihydrodiols and aromatic amines. Mechanistically, uses molecular oxygen inserting one oxygen atom into a substrate, and reducing the second into a water molecule, with two electrons provided by NADPH via cytochrome P450 reductase (CPR; NADPH-ferrihemoprotein reductase). This chain is Cytochrome P450 2W1, found in Homo sapiens (Human).